A 645-amino-acid chain; its full sequence is Dictomallein-like protein (645 aa).

The signal sequence occupies residues 1 to 13 (MKLSMVMVLLVLA). The segment at 19-55 (CGGNDDNNSERTHESGDSNGDVTTPDNDASSNDEDDA) is disordered. The Peptidase M66 domain occupies 177–448 (PALHPELDLT…QRWVRNRARM (272 aa)). H333 contacts Zn(2+). E334 is a catalytic residue. Residues H337 and H343 each coordinate Zn(2+).

Belongs to the dictomallein family. It depends on Zn(2+) as a cofactor.

Its subcellular location is the secreted. This is Dictomallein-like protein (dtmL) from Hahella chejuensis (strain KCTC 2396).